A 471-amino-acid polypeptide reads, in one-letter code: U1 small nuclear ribonucleoprotein 70 kDa (471 aa).

Residues 48-78 (FEDPRDAPPPTRAETREERMERKRREKIERR) form a disordered region. The segment covering 60 to 78 (AETREERMERKRREKIERR) has biased composition (basic and acidic residues). A required for interaction with U1 RNA region spans residues 92-202 (HNDQNAQGDA…GGGLGGTRRG (111 aa)). In terms of domain architecture, RRM spans 103–184 (KTLFVARVNY…LVDVERGRTV (82 aa)). The tract at residues 187–471 (WRPRRLGGGL…NGYMMEPPME (285 aa)) is disordered. Positions 192-201 (LGGGLGGTRR) are enriched in gly residues. A compositionally biased stretch (basic and acidic residues) spans 207–245 (NIRHSGRDDTSRYDERDRDRERERDRRERSRERDKERER). The segment covering 246–259 (RRSRSRERRRRSRS) has biased composition (basic residues). The segment covering 260 to 293 (REKEERKRSRERSRDKDKDKDKDKDKEKDKDKDR) has biased composition (basic and acidic residues). Over residues 294–303 (DRKRRSRSRE) the composition is skewed to basic residues. Basic and acidic residues-rich tracts occupy residues 304-321 (RKRE…RVEG) and 344-428 (IELK…ERVP).

As to quaternary structure, component of the U1 snRNP. The U1 snRNP is composed of the U1 snRNA and the 7 core Sm proteins snrpb, snrpd1, snrpd2, snrpd3, snrpe, snrpf and snrpg that assemble in a heptameric protein ring on the Sm site of the small nuclear RNA to form the core snRNP, and at least three U1 snRNP-specific proteins snrnp70/U1-70K, snrpa/U1-A and snrpc/U1-C.

The protein localises to the nucleus speckle. Its subcellular location is the nucleus. It is found in the nucleoplasm. Functionally, component of the spliceosomal U1 snRNP, which is essential for recognition of the pre-mRNA 5' splice-site and the subsequent assembly of the spliceosome. snrnp70 binds to the loop I region of U1-snRNA. This is U1 small nuclear ribonucleoprotein 70 kDa (snrnp70) from Xenopus tropicalis (Western clawed frog).